Here is a 113-residue protein sequence, read N- to C-terminus: Antimicrobial peptide microplusin (113 aa).

The first 19 residues, methionine 1 to alanine 19, serve as a signal peptide directing secretion. 3 disulfides stabilise this stretch: cysteine 25/cysteine 71, cysteine 38/cysteine 99, and cysteine 60/cysteine 65.

The protein localises to the secreted. Its function is as follows. Has bacteriostatic activity against Gram-positive bacteria, but not against Gram-negative bacteria. Has fungistatic activity against some but not all fungi. Binds and sequesters copper and iron ions. Copper-chelating activity is crucial for antimicrobial activity against M.luteus. This is Antimicrobial peptide microplusin from Argas monolakensis (Mono lake bird tick).